The primary structure comprises 695 residues: G-protein coupled receptor-associated protein LMBRD2 (695 aa).

Residues 1-5 are Extracellular-facing; that stretch reads MSGAA. Residues 6-21 traverse the membrane as a helical segment; that stretch reads LGLEIVFVFFLALFLL. Residues 22–32 lie on the Cytoplasmic side of the membrane; that stretch reads HRYGDFKKQHR. Residues 33–53 form a helical membrane-spanning segment; it reads LVIIGTLLAWYLCFLIVFILP. Over 54–105 the chain is Extracellular; it reads LDVSTTIYNRCKHAAANSSPPENSNITGLYATANPVPSQHPCFKPWSYIPDG. N-linked (GlcNAc...) asparagine glycosylation occurs at Asn78. Residues 106–126 form a helical membrane-spanning segment; sequence IMPIFWRVVYWTSQFLTWILL. The Cytoplasmic segment spans residues 127–150; sequence PFMQSYARSGGFSITGKIKTALIE. Residues 151 to 171 form a helical membrane-spanning segment; that stretch reads NAIYYGTYLLIFGAFLIYVAV. At 172-186 the chain is on the extracellular side; it reads NPHLHLEWNQLQTIG. A helical membrane pass occupies residues 187–207; sequence IAAANTWGLFLLVLLLGYGLV. Over 208–387 the chain is Cytoplasmic; that stretch reads EIPRSYWNGA…ECLLRPWFYK (180 aa). A coiled-coil region spans residues 227-262; that stretch reads YFKAAKLMTEKADAEENLEDAMEEVRKVNESIKYNH. A helical membrane pass occupies residues 388–408; it reads ILAVVLSIFSVIVVWSECTFF. Residues 409 to 432 are Extracellular-facing; the sequence is STTPVLSLFAVFIQLAEKTYNYIY. A helical membrane pass occupies residues 433-453; sequence IEIACFLSIFFLSICVYSTVF. Topologically, residues 454 to 473 are cytoplasmic; that stretch reads RIRVFNYYYLASHHQTDAYS. A helical membrane pass occupies residues 474–494; it reads LLFSGMLFCRLTPPLCLNFLG. Topologically, residues 495–521 are extracellular; sequence LTHMDSSISHKNTQPTAYTSIMGSMKV. Residues 522 to 542 traverse the membrane as a helical segment; the sequence is LSFIADGFYIYYPMLVVILCI. Topologically, residues 543–695 are cytoplasmic; the sequence is ATYFSLGTRC…MSRSDIFNDV (153 aa). A coiled-coil region spans residues 571-603; it reads LVNEGKELIRKEKRKRQRQEEGENRRREWKERY. A disordered region spans residues 581–628; that stretch reads KEKRKRQRQEEGENRRREWKERYGHNREDSTRNRNIHTDPKESNFSDV. A compositionally biased stretch (basic and acidic residues) spans 588-624; sequence RQEEGENRRREWKERYGHNREDSTRNRNIHTDPKESN. Ser633 is subject to Phosphoserine. The tract at residues 662–682 is disordered; that stretch reads AETFTDDPLESESGRYQPGGR.

Belongs to the LIMR family.

It is found in the cell membrane. Recruited to ligand-activated beta-2 adrenergic receptor/ADRB2, it negatively regulates the adrenergic receptor signaling pathway. May also regulate other G-protein coupled receptors including type-1 angiotensin II receptor/AGTR1. The sequence is that of G-protein coupled receptor-associated protein LMBRD2 from Homo sapiens (Human).